The sequence spans 484 residues: Protein phosphatase 1B (484 aa).

The segment covering 1–14 (MGAFLDKPKTEKHN) has biased composition (basic and acidic residues). A disordered region spans residues 1-20 (MGAFLDKPKTEKHNAHGAGN). Gly2 is lipidated: N-myristoyl glycine. Lys12 participates in a covalent cross-link: Glycyl lysine isopeptide (Lys-Gly) (interchain with G-Cter in ISG15). Positions 23-295 (RYGLSSMQGW…DNMSIVLVCF (273 aa)) constitute a PPM-type phosphatase domain. 2 residues coordinate Mn(2+): Asp60 and Gly61. A Glycyl lysine isopeptide (Lys-Gly) (interchain with G-Cter in ISG15) cross-link involves residue Lys142. Mn(2+) is bound by residues Asp243 and Asp286. Ser391 is modified (phosphoserine). The segment at 431–484 (EENPAEQAATAASSNSDAGNTVAMQESHTESKSDLAELDSCTEDAGTKMSGEKL) is disordered. Polar residues predominate over residues 440 to 456 (TAASSNSDAGNTVAMQE).

This sequence belongs to the PP2C family. As to quaternary structure, monomer. Interacts with PAK6. Interacts with the phosphorylated form of IKBKB/IKKB. Requires Mg(2+) as cofactor. The cofactor is Mn(2+). Post-translationally, isgylation negatively regulates its activity. N-myristoylation is essential for the recognition of its substrates for dephosphorylation.

The protein resides in the cytoplasm. The protein localises to the cytosol. It localises to the membrane. It catalyses the reaction O-phospho-L-seryl-[protein] + H2O = L-seryl-[protein] + phosphate. It carries out the reaction O-phospho-L-threonyl-[protein] + H2O = L-threonyl-[protein] + phosphate. Its function is as follows. Enzyme with a broad specificity. Dephosphorylates PRKAA1 and PRKAA2. Inhibits TBK1-mediated antiviral signaling by dephosphorylating it at 'Ser-172'. Plays an important role in the termination of TNF-alpha-mediated NF-kappa-B activation through dephosphorylating and inactivating IKBKB/IKKB. The protein is Protein phosphatase 1B (PPM1B) of Bos taurus (Bovine).